A 331-amino-acid chain; its full sequence is Biotin synthase (331 aa).

The 226-residue stretch at Pro-52–Arg-277 folds into the Radical SAM core domain. [4Fe-4S] cluster-binding residues include Cys-67, Cys-71, and Cys-74. Positions 110, 202, and 272 each coordinate [2Fe-2S] cluster.

This sequence belongs to the radical SAM superfamily. Biotin synthase family. Homodimer. [4Fe-4S] cluster serves as cofactor. The cofactor is [2Fe-2S] cluster.

It carries out the reaction (4R,5S)-dethiobiotin + (sulfur carrier)-SH + 2 reduced [2Fe-2S]-[ferredoxin] + 2 S-adenosyl-L-methionine = (sulfur carrier)-H + biotin + 2 5'-deoxyadenosine + 2 L-methionine + 2 oxidized [2Fe-2S]-[ferredoxin]. It participates in cofactor biosynthesis; biotin biosynthesis; biotin from 7,8-diaminononanoate: step 2/2. Its function is as follows. Catalyzes the conversion of dethiobiotin (DTB) to biotin by the insertion of a sulfur atom into dethiobiotin via a radical-based mechanism. The polypeptide is Biotin synthase (Salinispora arenicola (strain CNS-205)).